Reading from the N-terminus, the 561-residue chain is Potassium-transporting ATPase potassium-binding subunit (561 aa).

10 helical membrane-spanning segments follow: residues 4–24, 65–85, 133–153, 177–197, 253–273, 285–305, 380–400, 417–437, 484–504, and 528–548; these read IVMQ…PLGI, AVSV…VLML, IGLT…LFAV, LYIL…QGVV, FTNL…VVMF, AIMT…TISE, GLYG…LLVG, MVCL…AVAV, MVGA…ALYL, and FIGL…LPAL.

Belongs to the KdpA family. The system is composed of three essential subunits: KdpA, KdpB and KdpC.

It localises to the cell membrane. In terms of biological role, part of the high-affinity ATP-driven potassium transport (or Kdp) system, which catalyzes the hydrolysis of ATP coupled with the electrogenic transport of potassium into the cytoplasm. This subunit binds the extracellular potassium ions and delivers the ions to the membrane domain of KdpB through an intramembrane tunnel. The sequence is that of Potassium-transporting ATPase potassium-binding subunit from Listeria monocytogenes serotype 4a (strain HCC23).